The sequence spans 273 residues: Secretory carrier-associated membrane protein 6 (273 aa).

The tract at residues 1-69 is disordered; it reads MHHDPNPFDE…MGDSKSKARE (69 aa). Over 1-131 the chain is Cytoplasmic; it reads MHHDPNPFDE…LQKLQYLAFA (131 aa). The segment covering 20 to 30 has biased composition (gly residues); it reads NGGGGGGGGGS. Residues 68-94 are a coiled coil; the sequence is RELSSWETDLKRREADIKRREEALRNA. Transmembrane regions (helical) follow at residues 132-152, 159-179, 194-214, and 239-259; these read SWLG…VCWI, LFFL…LIWY, FGWF…AAIA, and IIGI…LLSI. At 260 to 273 the chain is on the cytoplasmic side; that stretch reads GVLQRVYMYFRGNK.

The protein belongs to the SCAMP family.

The protein localises to the cell membrane. Its subcellular location is the cytoplasmic vesicle. It localises to the secretory vesicle membrane. Probably involved in membrane trafficking. The sequence is that of Secretory carrier-associated membrane protein 6 (SCAMP6) from Oryza sativa subsp. japonica (Rice).